A 131-amino-acid chain; its full sequence is Ribosome-binding factor A (131 aa).

Belongs to the RbfA family. Monomer. Binds 30S ribosomal subunits, but not 50S ribosomal subunits or 70S ribosomes.

The protein resides in the cytoplasm. One of several proteins that assist in the late maturation steps of the functional core of the 30S ribosomal subunit. Associates with free 30S ribosomal subunits (but not with 30S subunits that are part of 70S ribosomes or polysomes). Required for efficient processing of 16S rRNA. May interact with the 5'-terminal helix region of 16S rRNA. In Thermotoga sp. (strain RQ2), this protein is Ribosome-binding factor A.